Here is a 258-residue protein sequence, read N- to C-terminus: 1-(5-phosphoribosyl)-5-[(5-phosphoribosylamino)methylideneamino] imidazole-4-carboxamide isomerase (258 aa).

Residue Asp17 is the Proton acceptor of the active site. Asp136 (proton donor) is an active-site residue.

This sequence belongs to the HisA/HisF family.

The protein localises to the cytoplasm. It carries out the reaction 1-(5-phospho-beta-D-ribosyl)-5-[(5-phospho-beta-D-ribosylamino)methylideneamino]imidazole-4-carboxamide = 5-[(5-phospho-1-deoxy-D-ribulos-1-ylimino)methylamino]-1-(5-phospho-beta-D-ribosyl)imidazole-4-carboxamide. The protein operates within amino-acid biosynthesis; L-histidine biosynthesis; L-histidine from 5-phospho-alpha-D-ribose 1-diphosphate: step 4/9. The chain is 1-(5-phosphoribosyl)-5-[(5-phosphoribosylamino)methylideneamino] imidazole-4-carboxamide isomerase from Corynebacterium jeikeium (strain K411).